A 165-amino-acid chain; its full sequence is Phosphopantetheine adenylyltransferase (165 aa).

Threonine 11 contributes to the substrate binding site. Residues 11-12 and histidine 19 each bind ATP; that span reads TF. Substrate contacts are provided by lysine 43, threonine 79, and arginine 93. Residues glutamate 104 and 128–134 contribute to the ATP site; that span reads LEPLNST.

The protein belongs to the bacterial CoaD family. In terms of assembly, homohexamer. The cofactor is Mg(2+).

The protein localises to the cytoplasm. The enzyme catalyses (R)-4'-phosphopantetheine + ATP + H(+) = 3'-dephospho-CoA + diphosphate. It participates in cofactor biosynthesis; coenzyme A biosynthesis; CoA from (R)-pantothenate: step 4/5. Reversibly transfers an adenylyl group from ATP to 4'-phosphopantetheine, yielding dephospho-CoA (dPCoA) and pyrophosphate. This Lactococcus lactis subsp. lactis (strain IL1403) (Streptococcus lactis) protein is Phosphopantetheine adenylyltransferase.